Reading from the N-terminus, the 479-residue chain is MYDSTSKIKDLSLAPFGKLQMEISETEMPGLMTIREEYEKLKPLKGAKITGCLHMTIETALLMETLQKLGAKLRWCSCNIYSTLDYAAAAVSTLENVSVFAWRGETLEEYWWCVEKALTWGENGEGPDLIVDDGADASYLVHKGAEYEKLYEEKKILPDPETGKNEEERCFLSLIKSSILKNPKKWTNMSKKIIGMSEETTTGVLRVKKIEKNNGLLFTAINVNDSVTKQKYDNIYGCRHSLPDGLMRATDFMISGKIVVICGYGDVGKGCASAMKGLGARVYVTEVDPICAIQAVMEGFNVVTLEEIVEKGDFFVTCTGNVDIIKLEHLLKMKNNAVVGNIGHFDDEIQIADLFSHEGIEIENVKPQVDRVTLPNGNKIIVLAQGRLLNLACATGHPAFVMSFSFCNQVFAQLELWENRNTGKYEKNKSYILPKELDEKVAYYHLKKLNATLTELDDNQCEFLGVSKNGPFKSEAYRY.

3 residues coordinate substrate: Thr-56, Asp-133, and Glu-199. An NAD(+)-binding site is contributed by 200 to 202 (TTT). Residues Lys-229 and Asp-233 each coordinate substrate. NAD(+)-binding positions include Asn-234, 263–268 (GYGDVG), Glu-286, Asn-321, 342–344 (IGH), and Asn-390.

It belongs to the adenosylhomocysteinase family. As to quaternary structure, homotetramer. It depends on NAD(+) as a cofactor.

The catalysed reaction is S-adenosyl-L-homocysteine + H2O = L-homocysteine + adenosine. It functions in the pathway amino-acid biosynthesis; L-homocysteine biosynthesis; L-homocysteine from S-adenosyl-L-homocysteine: step 1/1. In terms of biological role, adenosylhomocysteine is a competitive inhibitor of S-adenosyl-L-methionine-dependent methyl transferase reactions; therefore adenosylhomocysteinase may play a key role in the control of methylations via regulation of the intracellular concentration of adenosylhomocysteine. The protein is Adenosylhomocysteinase of Plasmodium chabaudi chabaudi.